The following is a 183-amino-acid chain: MTTASPSQVRQNYHQDSEAAINRQINLELYASYVYLSMSYYFDRDDVALKNFAKYFLHQSHEEREHAEKLMKLQNQRGGRIFLQDIKKPDRDDWENGLNAMECALHLEKSVNQSLLELHKLATDKNDPHLCDFIETHYLNEQVKSIKELGDHVTNLRKMGAPESGMAEYLFDKHTLGNSDNES.

At Met1 the chain carries N-acetylmethionine. Residue Thr2 is modified to N-acetylthreonine; in Ferritin heavy chain, N-terminally processed. Residues 11-160 (QNYHQDSEAA…DHVTNLRKMG (150 aa)) enclose the Ferritin-like diiron domain. 5 residues coordinate Fe cation: Glu28, Glu63, His66, Glu108, and Gln142. Phosphoserine is present on residues Ser179 and Ser183.

Belongs to the ferritin family. In terms of assembly, oligomer of 24 subunits. There are two types of subunits: L (light) chain and H (heavy) chain. The major chain can be light or heavy, depending on the species and tissue type. The functional molecule forms a roughly spherical shell with a diameter of 12 nm and contains a central cavity into which the insoluble mineral iron core is deposited. Interacts with NCOA4; NCOA4 promotes targeting of the iron-binding ferritin complex to autolysosomes following starvation or iron depletion.

It is found in the cytoplasm. The protein resides in the lysosome. It localises to the cytoplasmic vesicle. The protein localises to the autophagosome. It catalyses the reaction 4 Fe(2+) + O2 + 4 H(+) = 4 Fe(3+) + 2 H2O. Stores iron in a soluble, non-toxic, readily available form. Important for iron homeostasis. Has ferroxidase activity. Iron is taken up in the ferrous form and deposited as ferric hydroxides after oxidation. Also plays a role in delivery of iron to cells. Mediates iron uptake in capsule cells of the developing kidney. Delivery to lysosomes is mediated by the cargo receptor NCOA4 for autophagic degradation and release of iron. This chain is Ferritin heavy chain (FTH1), found in Canis lupus familiaris (Dog).